The chain runs to 468 residues: Chromosomal replication initiator protein DnaA (468 aa).

The tract at residues 1–84 (MSSSLWLQCL…RFEVGSRRVA (84 aa)) is domain I, interacts with DnaA modulators. Residues 84–131 (AAPKPAPTRTPADVAAESSAPAQLQARKPVHKTWDDDAQVIADINHRS) form a domain II region. The span at 85–95 (APKPAPTRTPA) shows a compositional bias: low complexity. The segment at 85–104 (APKPAPTRTPADVAAESSAP) is disordered. A domain III, AAA+ region region spans residues 132-348 (NVNPKHKFNN…GALNRVIANA (217 aa)). Residues G176, G178, K179, and T180 each coordinate ATP. The domain IV, binds dsDNA stretch occupies residues 349–468 (NFTGRPITID…YSNLIRTLSS (120 aa)).

This sequence belongs to the DnaA family. As to quaternary structure, oligomerizes as a right-handed, spiral filament on DNA at oriC.

Its subcellular location is the cytoplasm. In terms of biological role, plays an essential role in the initiation and regulation of chromosomal replication. ATP-DnaA binds to the origin of replication (oriC) to initiate formation of the DNA replication initiation complex once per cell cycle. Binds the DnaA box (a 9 base pair repeat at the origin) and separates the double-stranded (ds)DNA. Forms a right-handed helical filament on oriC DNA; dsDNA binds to the exterior of the filament while single-stranded (ss)DNA is stabiized in the filament's interior. The ATP-DnaA-oriC complex binds and stabilizes one strand of the AT-rich DNA unwinding element (DUE), permitting loading of DNA polymerase. After initiation quickly degrades to an ADP-DnaA complex that is not apt for DNA replication. Binds acidic phospholipids. Its function is as follows. Complements a temperature-sensitive E.coli mutant, the DnaA consensus is 5'-TT(A/T)TNCACA-3'. The sequence is that of Chromosomal replication initiator protein DnaA from Vibrio harveyi (Beneckea harveyi).